The following is a 572-amino-acid chain: Sialate:O-sulfotransferase 2 (572 aa).

Over 1–18 the chain is Cytoplasmic; the sequence is MARSLLKIHRYFRRKPVR. The helical; Signal-anchor for type II membrane protein transmembrane segment at 19–39 threads the bilayer; it reads FFSFILLYLTAGSLVFLHSGF. The Extracellular segment spans residues 40 to 572; sequence SSDSSTAGIA…SGVPDEYRPR (533 aa). 2 consecutive WSC domains span residues 134 to 226 and 237 to 331; these read RAKY…YRLE and SAIF…YQTQ. N-linked (GlcNAc...) asparagine glycosylation is found at Asn196, Asn249, Asn262, and Asn561.

It belongs to the WSCD family.

It localises to the golgi apparatus membrane. Sialate:O-sulfotransferase which catalyzes 8-O-sulfation at the Sia-glycan level using 3'-phosphoadenosine 5'-phosphosulfate (PAPS) as a donor, forming 8-O-sulfated Sia (Sia8S)-glycans. The polypeptide is Sialate:O-sulfotransferase 2 (wscd2) (Danio rerio (Zebrafish)).